Consider the following 327-residue polypeptide: Quinone oxidoreductase (327 aa).

It belongs to the zinc-containing alcohol dehydrogenase family. Quinone oxidoreductase subfamily. Homodimer.

It catalyses the reaction 2 a quinone + NADPH + H(+) = 2 a 1,4-benzosemiquinone + NADP(+). This Salmonella typhimurium (strain LT2 / SGSC1412 / ATCC 700720) protein is Quinone oxidoreductase (qor).